Consider the following 1076-residue polypeptide: Atos homolog protein A (1076 aa).

A transactivation domain 1 (TAD1) region spans residues 24–32; it reads ALLITEGRT. Disordered regions lie at residues 700 to 721 and 739 to 765; these read ESMSSNKDSKRPKTCEQNTQLN and SDQLKNEQDKQEDPTNEKSQNYSQRRS. Residues 739 to 754 are compositionally biased toward basic and acidic residues; that stretch reads SDQLKNEQDKQEDPTN. A required for macropage invasion region spans residues 878–935; it reads LLGNFEESVLNYRFDPLGIVDGFTAEVGASGAFCPTHLTLPVEVSFYSVSDDNAPSPY. The interval 962 to 970 is transactivation domain 2 (TAD2); sequence FNPNKTVVK.

This sequence belongs to the ATOS family.

The protein localises to the nucleus. Functionally, transcription regulator that syncronizes transcriptional and translational programs to promote macrophage invasion of tissues. The chain is Atos homolog protein A from Homo sapiens (Human).